We begin with the raw amino-acid sequence, 522 residues long: F-box only protein 7 (522 aa).

Disordered regions lie at residues 1–20 and 85–128; these read MKLR…PESE and PNLP…HGQV. Positions 1 to 88 are ubiquitin-like; that stretch reads MKLRVRLQKR…EDEMPAPNLP (88 aa). Polar residues predominate over residues 87–114; sequence LPSSTDSEHSSLQNNDQPPLAATSSQAN. An important for interaction with PINK1 region spans residues 92–129; that stretch reads DSEHSSLQNNDQPPLAATSSQANIPDEQGSDSSHGQVT. Residues 129–169 are important for interaction with CDK6; that stretch reads TQYDAWTDDSMEGPSHSAEAVSIQDAMSVEEASGFHPLEPM. Residues 180-324 form an important for dimerization and interaction with PSMF1 region; it reads PHSLEALYQS…PLLAFTRQVL (145 aa). The F-box domain maps to 329-375; sequence VFGLVVLPLELKLRIFRLLDVHSVLALSAVCHDLLIASNDPLLWRCL. Positions 381–522 are important for interaction with CDK6; sequence RDSTIRGPDT…RSADNRLPYL (142 aa). 2 positions are modified to omega-N-methylarginine: Arg-431 and Arg-451. The disordered stretch occupies residues 459–522; the sequence is DPVTSLIPRP…RSADNRLPYL (64 aa). The RFDP motif signature appears at 481–484; the sequence is RFDP. Arg-518 bears the Asymmetric dimethylarginine mark.

Part of the SCF (SKP1-CUL1-F-box) E3 ubiquitin-protein ligase complex SCF(FBXO7) formed of CUL1, SKP1, RBX1 and FBXO7. Interacts via its C-terminal proline-rich region with DLGAP5. Interacts with BIRC2. Interacts with CDK6 and promotes its interaction with D-type cyclin. Interacts (via the N-terminal Ubl domain) with PRKN. Interacts (via N-terminal region) with PINK1. Interacts with PSMF1.

Its subcellular location is the cytoplasm. The protein localises to the nucleus. It is found in the mitochondrion. The protein resides in the cytosol. It functions in the pathway protein modification; protein ubiquitination. Substrate recognition component of a SCF (SKP1-CUL1-F-box protein) E3 ubiquitin-protein ligase complex which mediates the ubiquitination and subsequent proteasomal degradation of target proteins and plays a role in several biological processes such as cell cycle, cell proliferation, or maintenance of chromosome stability. Recognizes and ubiquitinates BIRC2 and the cell cycle regulator DLGAP5. Plays a role downstream of PINK1 in the clearance of damaged mitochondria via selective autophagy (mitophagy) by targeting PRKN to dysfunctional depolarized mitochondria. Promotes MFN1 ubiquitination. Mediates the ubiquitination and proteasomal degradation of UXT isoform 2, thereby impairing the NF-kappa-B signaling pathway. Inhibits NF-kappa-B pathway also by promoting the ubiquitinatioin of TRAF2. Affects the assembly state and activity of the proteasome in the cells including neurons by ubiquitinating the proteasomal subunit PSMA2 via 'Lys-63'-linked polyubiquitin chains. Promotes 'Lys-48'-linked polyubiquitination SIRT7, leading to the hydrogen peroxide-induced cell death. The chain is F-box only protein 7 (Fbxo7) from Rattus norvegicus (Rat).